We begin with the raw amino-acid sequence, 630 residues long: UvrABC system protein C (630 aa).

The segment at 1–96 (MGAEGLQGEG…GEAHRRGGTG (96 aa)) is disordered. Positions 9–28 (EGEVPPQGAGVPGQVQVGVH) are enriched in low complexity. Residues 52–125 (DPRGLPVEAG…IKAHRPLYNV (74 aa)) form the GIY-YIG domain. The segment covering 75–91 (RPGEKLLPRRGQGEAHR) has biased composition (basic and acidic residues). The 36-residue stretch at 234–269 (DGLLQELEAKMREAARRLEFERAAEIRDQMEALRAF) folds into the UVR domain.

Belongs to the UvrC family. As to quaternary structure, interacts with UvrB in an incision complex.

The protein localises to the cytoplasm. Functionally, the UvrABC repair system catalyzes the recognition and processing of DNA lesions. UvrC both incises the 5' and 3' sides of the lesion. The N-terminal half is responsible for the 3' incision and the C-terminal half is responsible for the 5' incision. The protein is UvrABC system protein C of Thermus thermophilus (strain ATCC BAA-163 / DSM 7039 / HB27).